Here is a 222-residue protein sequence, read N- to C-terminus: Small ribosomal subunit protein uS3 (222 aa).

Positions 39–108 (IRRHIKEKLY…TISLDIKEIK (70 aa)) constitute a KH type-2 domain.

The protein belongs to the universal ribosomal protein uS3 family. Part of the 30S ribosomal subunit. Forms a tight complex with proteins S10 and S14.

Binds the lower part of the 30S subunit head. Binds mRNA in the 70S ribosome, positioning it for translation. The polypeptide is Small ribosomal subunit protein uS3 (Caldicellulosiruptor saccharolyticus (strain ATCC 43494 / DSM 8903 / Tp8T 6331)).